The sequence spans 172 residues: Crossover junction endodeoxyribonuclease RuvC (172 aa).

Residues Asp7, Glu67, and Asp140 contribute to the active site. Positions 7, 67, and 140 each coordinate Mg(2+).

Belongs to the RuvC family. In terms of assembly, homodimer which binds Holliday junction (HJ) DNA. The HJ becomes 2-fold symmetrical on binding to RuvC with unstacked arms; it has a different conformation from HJ DNA in complex with RuvA. In the full resolvosome a probable DNA-RuvA(4)-RuvB(12)-RuvC(2) complex forms which resolves the HJ. Requires Mg(2+) as cofactor.

The protein localises to the cytoplasm. It catalyses the reaction Endonucleolytic cleavage at a junction such as a reciprocal single-stranded crossover between two homologous DNA duplexes (Holliday junction).. Functionally, the RuvA-RuvB-RuvC complex processes Holliday junction (HJ) DNA during genetic recombination and DNA repair. Endonuclease that resolves HJ intermediates. Cleaves cruciform DNA by making single-stranded nicks across the HJ at symmetrical positions within the homologous arms, yielding a 5'-phosphate and a 3'-hydroxyl group; requires a central core of homology in the junction. The consensus cleavage sequence is 5'-(A/T)TT(C/G)-3'. Cleavage occurs on the 3'-side of the TT dinucleotide at the point of strand exchange. HJ branch migration catalyzed by RuvA-RuvB allows RuvC to scan DNA until it finds its consensus sequence, where it cleaves and resolves the cruciform DNA. This chain is Crossover junction endodeoxyribonuclease RuvC, found in Syntrophomonas wolfei subsp. wolfei (strain DSM 2245B / Goettingen).